The following is a 170-amino-acid chain: Peptide deformylase (170 aa).

C91 and H133 together coordinate Fe cation. Residue E134 is part of the active site. Position 137 (H137) interacts with Fe cation.

The protein belongs to the polypeptide deformylase family. It depends on Fe(2+) as a cofactor.

The enzyme catalyses N-terminal N-formyl-L-methionyl-[peptide] + H2O = N-terminal L-methionyl-[peptide] + formate. Its function is as follows. Removes the formyl group from the N-terminal Met of newly synthesized proteins. Requires at least a dipeptide for an efficient rate of reaction. N-terminal L-methionine is a prerequisite for activity but the enzyme has broad specificity at other positions. In Aliivibrio fischeri (strain ATCC 700601 / ES114) (Vibrio fischeri), this protein is Peptide deformylase.